Here is a 148-residue protein sequence, read N- to C-terminus: SPbeta prophage-derived disulfide bond formation protein B (148 aa).

A helical membrane pass occupies residues 7–26; it reads KSFFLLLFFLSFFGTMASLF. An intrachain disulfide couples C36 to C39. The next 2 membrane-spanning stretches (helical) occupy residues 41-60 and 67-84; these read YQRIFLYPIPIILLIGLLKK and YVVFLSSIGLIIAFYHYI. C95 and C102 form a disulfide bridge. A helical transmembrane segment spans residues 111–135; sequence GFITLPLMSSVCFALIFGIGLKLII.

The protein belongs to the DsbB family. BdbC subfamily.

The protein resides in the cell membrane. Its function is as follows. Important but not absolutely essential for the production of the lantibiotic sublancin 168, it may also be required for the stability of other secreted proteins. Not required for competence for DNA uptake. The chain is SPbeta prophage-derived disulfide bond formation protein B (bdbB) from Bacillus subtilis (strain 168).